Here is a 321-residue protein sequence, read N- to C-terminus: Probable endolytic peptidoglycan transglycosylase RlpA (321 aa).

It belongs to the RlpA family.

In terms of biological role, lytic transglycosylase with a strong preference for naked glycan strands that lack stem peptides. The sequence is that of Probable endolytic peptidoglycan transglycosylase RlpA from Synechocystis sp. (strain ATCC 27184 / PCC 6803 / Kazusa).